The following is a 332-amino-acid chain: L-lactate dehydrogenase C chain (332 aa).

Residues 29–57 (GAVGMACAICILLKDLADELALVDVAVDK) and Arg99 each bind NAD(+). Substrate is bound by residues Arg106, Asn138, and Arg169. NAD(+) is bound at residue Asn138. The Proton acceptor role is filled by His193. Thr248 contacts substrate. The residue at position 301 (Ser301) is a Phosphoserine.

This sequence belongs to the LDH/MDH superfamily. LDH family. In terms of assembly, homotetramer. Interacts with RABL2/RABL2A; binds preferentially to GTP-bound RABL2.

It localises to the cytoplasm. It catalyses the reaction (S)-lactate + NAD(+) = pyruvate + NADH + H(+). The protein operates within fermentation; pyruvate fermentation to lactate; (S)-lactate from pyruvate: step 1/1. Its function is as follows. Possible role in sperm motility. This Sus scrofa (Pig) protein is L-lactate dehydrogenase C chain (LDHC).